Here is a 303-residue protein sequence, read N- to C-terminus: Probable acetylxylan esterase A (303 aa).

Residues 1–23 (MLSTHLLFLATTLLTSLFHPIAA) form the signal peptide. Ser-147 (charge relay system) is an active-site residue. Asn-189 is a glycosylation site (N-linked (GlcNAc...) asparagine).

This sequence belongs to the carbohydrate esterase 1 (CE1) family. AxeA subfamily. Monomer.

The protein localises to the secreted. The enzyme catalyses Deacetylation of xylans and xylo-oligosaccharides.. Its pathway is glycan degradation; xylan degradation. In terms of biological role, acetylxylan esterase involved in the hydrolysis of xylan, a major structural heterogeneous polysaccharide found in plant biomass representing the second most abundant polysaccharide in the biosphere, after cellulose. Degrades acetylated xylans by cleaving acetyl side groups from the hetero-xylan backbone. The chain is Probable acetylxylan esterase A (axeA) from Aspergillus niger (strain ATCC MYA-4892 / CBS 513.88 / FGSC A1513).